The chain runs to 318 residues: Nitrate reductase [NADH] (318 aa).

Residues 216-291 (AKSFTMAEVE…LLEYYIGELA (76 aa)) form the Cytochrome b5 heme-binding domain. His-251 and His-274 together coordinate heme.

The protein belongs to the nitrate reductase family. As to quaternary structure, homodimer. It depends on FAD as a cofactor. The cofactor is heme. Mo-molybdopterin serves as cofactor.

The enzyme catalyses nitrite + NAD(+) + H2O = nitrate + NADH + H(+). In terms of biological role, nitrate reductase is a key enzyme involved in the first step of nitrate assimilation in plants, fungi and bacteria. The chain is Nitrate reductase [NADH] from Chlorella vulgaris (Green alga).